The primary structure comprises 313 residues: Acetyl-coenzyme A carboxylase carboxyl transferase subunit alpha (313 aa).

One can recognise a CoA carboxyltransferase C-terminal domain in the interval 36 to 286 (RLDKEVKTIY…KEYFLDTLRT (251 aa)).

It belongs to the AccA family. Acetyl-CoA carboxylase is a heterohexamer composed of biotin carboxyl carrier protein (AccB), biotin carboxylase (AccC) and two subunits each of ACCase subunit alpha (AccA) and ACCase subunit beta (AccD).

It localises to the cytoplasm. The enzyme catalyses N(6)-carboxybiotinyl-L-lysyl-[protein] + acetyl-CoA = N(6)-biotinyl-L-lysyl-[protein] + malonyl-CoA. Its pathway is lipid metabolism; malonyl-CoA biosynthesis; malonyl-CoA from acetyl-CoA: step 1/1. Its function is as follows. Component of the acetyl coenzyme A carboxylase (ACC) complex. First, biotin carboxylase catalyzes the carboxylation of biotin on its carrier protein (BCCP) and then the CO(2) group is transferred by the carboxyltransferase to acetyl-CoA to form malonyl-CoA. The sequence is that of Acetyl-coenzyme A carboxylase carboxyl transferase subunit alpha from Helicobacter acinonychis (strain Sheeba).